A 117-amino-acid chain; its full sequence is MKFVYKEEHPFEKRRSEGEKIRKKYPDRVPVIVEKAPKARIGDLDKKKYLVPSDLTVGQFYFLIRKRIHLRAEDALFFFVNNVIPPTSATMGQLYQEHHEEDFFLYIAYSDESVYGL.

Residues 1 to 22 (MKFVYKEEHPFEKRRSEGEKIR) form an interaction with beta-tubulin region. An interaction with GABRG2 region spans residues 36–68 (APKARIGDLDKKKYLVPSDLTVGQFYFLIRKRI). Positions 36–117 (APKARIGDLD…AYSDESVYGL (82 aa)) are interaction with GPHN. The interval 48–50 (KYL) is interaction with LIR (LC3 nteracting Region) motif of ATG3. G116 carries Phosphatidylethanolamine amidated glycine; alternate lipidation. G116 carries the Phosphatidylserine amidated glycine; alternate lipid modification. A propeptide (removed in mature form) is located at residue L117.

Belongs to the ATG8 family. Interacts with GPHN and NSF. Interacts with ATG3, ATG7 and ATG13. Interacts with alpha-tubulin. Interacts with beta-tubulin. Interacts with GABRG2. Interacts with RB1CC1. Interacts with ULK1. Interacts with CALR. Interacts with DDX47. Interacts with TP53INP1 and TP53INP2. Interacts with TBC1D5. Interacts with TBC1D25. Directly interacts with SQSTM1. Interacts with MAPK15. Interacts with TECPR2. Interacts with PCM1. Interacts with TRIM5 and TRIM21. Interacts with MEFV. Interacts with KIF21B. Interacts with WDFY3; this interaction is required for WDFY3 recruitment to MAP1LC3B-positive p62/SQSTM1 bodies. Interacts with FLCN; interaction regulates autophagy. Interacts with UBA5. Interacts with KBTBD6 and KBTBD7; the interaction is direct and required for the ubiquitination of TIAM1. Interacts with reticulophagy regulators RETREG1, RETREG2 and RETREG3. Interacts with IRGM. Interacts with STX17. Interacts with CT55; this interaction may be important for GABARAP protein stability. Interacts with DNM2. Interacts with NCOA4 (via C-terminus). In terms of processing, the precursor molecule is cleaved by ATG4 (ATG4A, ATG4B, ATG4C or ATG4D) to expose the glycine at the C-terminus and form the cytosolic form, GABARAP-I. The processed form is then activated by APG7L/ATG7, transferred to ATG3 and conjugated to phosphatidylethanolamine (PE) phospholipid to form the membrane-bound form, GABARAP-II. During non-canonical autophagy, the processed form is conjugated to phosphatidylserine (PS) phospholipid. ATG4 proteins also mediate the delipidation of PE-conjugated forms. In addition, ATG4B and ATG4D mediate delipidation of ATG8 proteins conjugated to PS during non-canonical autophagy. ATG4B constitutes the major protein for proteolytic activation. ATG4D is the main enzyme for delipidation activity. As to expression, expressed in brain (at protein level). Can be found in both somatodendritic and axonal compartment of neurons.

It localises to the cytoplasmic vesicle. The protein localises to the autophagosome membrane. The protein resides in the endomembrane system. It is found in the cytoplasm. Its subcellular location is the cytoskeleton. It localises to the golgi apparatus membrane. In terms of biological role, ubiquitin-like modifier that plays a role in intracellular transport of GABA(A) receptors and its interaction with the cytoskeleton. Involved in autophagy: while LC3s are involved in elongation of the phagophore membrane, the GABARAP/GATE-16 subfamily is essential for a later stage in autophagosome maturation. Through its interaction with the reticulophagy receptor TEX264, participates in the remodeling of subdomains of the endoplasmic reticulum into autophagosomes upon nutrient stress, which then fuse with lysosomes for endoplasmic reticulum turnover. Also required for the local activation of the CUL3(KBTBD6/7) E3 ubiquitin ligase complex, regulating ubiquitination a nd degradation of TIAM1, a guanyl-nucleotide exchange factor (GEF) that activates RAC1 and downstream signal transduction. Thereby, regulates different biological processes including the organization of the cytoskeleton, cell migration and proliferation. Involved in apoptosis. The polypeptide is Gamma-aminobutyric acid receptor-associated protein (Rattus norvegicus (Rat)).